Consider the following 76-residue polypeptide: MAAIKVKLVRGLAGCPWPHRVIVEGLGLKKRESTKLLPDTPQTLGMIAKVSYLVEWERVDAAPPPGRKARKAAARS.

It belongs to the universal ribosomal protein uL30 family. As to quaternary structure, part of the 50S ribosomal subunit.

This chain is Large ribosomal subunit protein uL30, found in Anaeromyxobacter dehalogenans (strain 2CP-1 / ATCC BAA-258).